Consider the following 710-residue polypeptide: Early transcription factor 82 kDa subunit (710 aa).

This sequence belongs to the poxviridae VETF large subunit family. In terms of assembly, heterodimer of a 70 kDa and a 82 kDa subunit. Part of the early transcription complex composed of ETF, RAP94/OPG109, and the DNA-directed RNA polymerase.

Its subcellular location is the virion. Acts with RNA polymerase to initiate transcription from early gene promoters. Is recruited by the RPO-associated protein of 94 kDa RAP94/OPG109 to form the early transcription complex, which also contains the core RNA polymerase. ETF heterodimer binds to early gene promoters. The polypeptide is Early transcription factor 82 kDa subunit (OPG133) (Homo sapiens (Human)).